Here is an 888-residue protein sequence, read N- to C-terminus: Aconitate hydratase A (888 aa).

[4Fe-4S] cluster-binding residues include Cys433, Cys499, and Cys502.

Belongs to the aconitase/IPM isomerase family. As to quaternary structure, monomer. [4Fe-4S] cluster serves as cofactor.

The enzyme catalyses citrate = D-threo-isocitrate. The catalysed reaction is (2S,3R)-3-hydroxybutane-1,2,3-tricarboxylate = 2-methyl-cis-aconitate + H2O. Its pathway is carbohydrate metabolism; tricarboxylic acid cycle; isocitrate from oxaloacetate: step 2/2. It participates in organic acid metabolism; propanoate degradation. In terms of biological role, involved in the catabolism of short chain fatty acids (SCFA) via the tricarboxylic acid (TCA)(acetyl degradation route) and probably the 2-methylcitrate cycle I (propionate degradation route). Catalyzes the reversible isomerization of citrate to isocitrate via cis-aconitate. Could catalyze the hydration of 2-methyl-cis-aconitate to yield (2R,3S)-2-methylisocitrate. The apo form of AcnA functions as a RNA-binding regulatory protein. The polypeptide is Aconitate hydratase A (acn) (Streptococcus mutans serotype c (strain ATCC 700610 / UA159)).